A 245-amino-acid chain; its full sequence is Chymotrypsin B (245 aa).

5 cysteine pairs are disulfide-bonded: Cys-1-Cys-121, Cys-42-Cys-58, Cys-135-Cys-201, Cys-167-Cys-182, and Cys-191-Cys-220. Positions 14–15 (AR) are excised as a propeptide. Residues 16 to 243 (IVNGEEAVPH…LRGWVDQILA (228 aa)) enclose the Peptidase S1 domain. Catalysis depends on charge relay system residues His-57 and Asp-101. The Charge relay system role is filled by Ser-195.

This sequence belongs to the peptidase S1 family.

It localises to the secreted. The protein resides in the extracellular space. The catalysed reaction is Preferential cleavage: Tyr-|-Xaa, Trp-|-Xaa, Phe-|-Xaa, Leu-|-Xaa.. The protein is Chymotrypsin B of Gadus morhua (Atlantic cod).